Reading from the N-terminus, the 420-residue chain is COP9 signalosome complex subunit 5 (420 aa).

One can recognise an MPN domain in the interval 73–208; sequence AALSALACMK…IGAFRTMPET (136 aa). Residues His-154, His-156, and Asp-167 each coordinate Zn(2+). Residues 154–167 carry the JAMM motif motif; sequence HSHPGYGCWLSGID.

This sequence belongs to the peptidase M67A family. CSN5 subfamily. Component of the COP9 signalosome (CSN) complex.

It is found in the cytoplasm. Its subcellular location is the nucleus. Catalytic component of the COP9 signalosome (CSN) complex that acts as an regulator of the ubiquitin (Ubl) conjugation pathway by mediating the deneddylation of the cullin subunit of SCF-type E3 ubiquitin-protein ligase complexes. The CSN complex is involved in the regulation of the mating pheromone response. This Eremothecium gossypii (strain ATCC 10895 / CBS 109.51 / FGSC 9923 / NRRL Y-1056) (Yeast) protein is COP9 signalosome complex subunit 5 (RRI1).